The following is a 449-amino-acid chain: Putative recombination initiation defects 3 (449 aa).

The disordered stretch occupies residues 21 to 56 (LRRSAEPQASQQLRSQQSQQSFSQGPSSSQRGCGGF). A compositionally biased stretch (low complexity) spans 28–50 (QASQQLRSQQSQQSFSQGPSSSQ). The Nuclear localization signal motif lies at 437-441 (RTKRK).

In terms of assembly, interacts with PRD1; this interaction facilitates a binding to DFO.

It localises to the nucleus. In terms of biological role, involved in DNA cleavage that forms the double-strand breaks (DSB) that initiate meiotic recombination. The sequence is that of Putative recombination initiation defects 3 from Arabidopsis thaliana (Mouse-ear cress).